Consider the following 378-residue polypeptide: Uroporphyrinogen decarboxylase (378 aa).

Residues 40 to 44, Asp-90, Tyr-167, Ser-222, and His-355 each bind substrate; that span reads RQAGR.

The protein belongs to the uroporphyrinogen decarboxylase family. In terms of assembly, homodimer.

It localises to the cytoplasm. It catalyses the reaction uroporphyrinogen III + 4 H(+) = coproporphyrinogen III + 4 CO2. It participates in porphyrin-containing compound metabolism; protoporphyrin-IX biosynthesis; coproporphyrinogen-III from 5-aminolevulinate: step 4/4. Functionally, catalyzes the decarboxylation of four acetate groups of uroporphyrinogen-III to yield coproporphyrinogen-III. This is Uroporphyrinogen decarboxylase from Psychrobacter arcticus (strain DSM 17307 / VKM B-2377 / 273-4).